Reading from the N-terminus, the 101-residue chain is Small ribosomal subunit protein uS14 (101 aa).

This sequence belongs to the universal ribosomal protein uS14 family. As to quaternary structure, part of the 30S ribosomal subunit. Contacts proteins S3 and S10.

Its function is as follows. Binds 16S rRNA, required for the assembly of 30S particles and may also be responsible for determining the conformation of the 16S rRNA at the A site. The chain is Small ribosomal subunit protein uS14 from Polynucleobacter asymbioticus (strain DSM 18221 / CIP 109841 / QLW-P1DMWA-1) (Polynucleobacter necessarius subsp. asymbioticus).